Consider the following 491-residue polypeptide: UDP-N-acetylmuramate--L-alanine ligase (491 aa).

126–132 (GTHGKTT) is an ATP binding site.

It belongs to the MurCDEF family.

The protein localises to the cytoplasm. The enzyme catalyses UDP-N-acetyl-alpha-D-muramate + L-alanine + ATP = UDP-N-acetyl-alpha-D-muramoyl-L-alanine + ADP + phosphate + H(+). It functions in the pathway cell wall biogenesis; peptidoglycan biosynthesis. In terms of biological role, cell wall formation. The protein is UDP-N-acetylmuramate--L-alanine ligase of Salmonella typhimurium (strain LT2 / SGSC1412 / ATCC 700720).